The following is a 327-amino-acid chain: Zinc transport protein ZntB (327 aa).

Residues 1-271 are Cytoplasmic-facing; that stretch reads MESFAGKELQ…AMNRRTYTMS (271 aa). The helical transmembrane segment at 272 to 292 threads the bilayer; sequence LLAMVFLPTTFLTGLFGVNLG. Residues 293–300 are Periplasmic-facing; the sequence is GIPGGDAP. A helical membrane pass occupies residues 301 to 321; it reads FGFFTFCLMLVILVGGVAWWL. The Cytoplasmic portion of the chain corresponds to 322–327; it reads KRSKWL.

This sequence belongs to the CorA metal ion transporter (MIT) (TC 1.A.35) family.

The protein resides in the cell inner membrane. The catalysed reaction is Zn(2+)(out) + H(+)(out) = Zn(2+)(in) + H(+)(in). Its function is as follows. Zinc transporter. Acts as a Zn(2+):proton symporter, which likely mediates zinc ion uptake. This Pectobacterium carotovorum subsp. carotovorum (strain PC1) protein is Zinc transport protein ZntB.